Here is a 154-residue protein sequence, read N- to C-terminus: Large ribosomal subunit protein uL30 (154 aa).

The protein belongs to the universal ribosomal protein uL30 family. In terms of assembly, part of the 50S ribosomal subunit.

In Methanococcus maripaludis (strain C5 / ATCC BAA-1333), this protein is Large ribosomal subunit protein uL30.